We begin with the raw amino-acid sequence, 78 residues long: Large ribosomal subunit protein bL28 (78 aa).

The protein belongs to the bacterial ribosomal protein bL28 family.

The protein is Large ribosomal subunit protein bL28 of Pseudoalteromonas atlantica (strain T6c / ATCC BAA-1087).